Consider the following 485-residue polypeptide: MNIFSGIEYKVLKDVNLDRKYDGIEYDSRKIKENYIFVAFEGANVDGHNYIDSAVKNGATCIIVSKKVEMKHNVSYILIDDIRHKLGYIASNFYEWPQRKLKIIGVTGTNGKTSSTYMIEKLMGDIPITRIGTIEYKIGDKVFEAVNTTPESLDLIKIFDKTLKKKIEYVIMEVSSHSLEIGRVEVLDFDYALFTNLTQDHLDYHLTMENYFQAKRKLFLKLKDINNSVINVDDEYGKRLYDEFIVDNPEIISYGIENGDLEGDYSDDGYIDVKYKNQIEKVKFSLLGDFNLYNTLGAIGIALKIGISMEEILKRVSNIKAAPGRFEALDCGQDYKVIVDYAHTPDALVNVIVAARNIKNGSRIITIFGCGGDRDRTKRPIMAKVAEDLSDVVILTSDNPRTESPEQIFDDVKKGFIKSDDYFFEPDREKAIKLAINMAEKNDIILITGKGHETYHIIGTKKWHFDDKEIARREIVRRKMVENVN.

Serine 28 lines the UDP-N-acetyl-alpha-D-muramoyl-L-alanyl-D-glutamate pocket. 108–114 contacts ATP; that stretch reads GTNGKTS. UDP-N-acetyl-alpha-D-muramoyl-L-alanyl-D-glutamate contacts are provided by residues asparagine 147, 148–149, serine 175, and arginine 183; that span reads TT. Position 215 is an N6-carboxylysine (lysine 215). Residues arginine 374, 398–401, glycine 449, and glutamate 453 contribute to the meso-2,6-diaminopimelate site; that span reads DNPR. The Meso-diaminopimelate recognition motif signature appears at 398-401; sequence DNPR.

This sequence belongs to the MurCDEF family. MurE subfamily. Requires Mg(2+) as cofactor. In terms of processing, carboxylation is probably crucial for Mg(2+) binding and, consequently, for the gamma-phosphate positioning of ATP.

It localises to the cytoplasm. The catalysed reaction is UDP-N-acetyl-alpha-D-muramoyl-L-alanyl-D-glutamate + meso-2,6-diaminopimelate + ATP = UDP-N-acetyl-alpha-D-muramoyl-L-alanyl-gamma-D-glutamyl-meso-2,6-diaminopimelate + ADP + phosphate + H(+). It functions in the pathway cell wall biogenesis; peptidoglycan biosynthesis. In terms of biological role, catalyzes the addition of meso-diaminopimelic acid to the nucleotide precursor UDP-N-acetylmuramoyl-L-alanyl-D-glutamate (UMAG) in the biosynthesis of bacterial cell-wall peptidoglycan. The polypeptide is UDP-N-acetylmuramoyl-L-alanyl-D-glutamate--2,6-diaminopimelate ligase (Fusobacterium nucleatum subsp. nucleatum (strain ATCC 25586 / DSM 15643 / BCRC 10681 / CIP 101130 / JCM 8532 / KCTC 2640 / LMG 13131 / VPI 4355)).